A 296-amino-acid chain; its full sequence is Arginine/serine-rich protein 1 (296 aa).

Positions 1 to 131 are disordered; it reads MSNYVNDMWP…RSRSRSRERS (131 aa). Ser12 is modified (phosphoserine). The segment covering 20-31 has biased composition (low complexity); that stretch reads SASRSGGSSRLS. Positions 32-125 are enriched in basic residues; that stretch reads SRSRSRSFSR…RSRSRSRSRS (94 aa). Phosphoserine occurs at positions 111 and 113. Arg141 carries the omega-N-methylarginine modification. Residues 156–165 show a composition bias toward basic and acidic residues; the sequence is ERSRWRDRSR. Disordered regions lie at residues 156–175 and 217–296; these read ERSR…TPFR and SHGI…WIPV. Over residues 245–261 the composition is skewed to polar residues; it reads EKPSQQRSIAFSSNNSV. Positions 272–287 are enriched in basic and acidic residues; sequence ATEETSSRSPKIDKKK. A Phosphoserine modification is found at Ser280.

This sequence belongs to the RSRP family. Post-translationally, phosphorylated. Phosphorylation at Ser-111 and Ser-113 mediates the interaction with spliceosome proteins.

The protein resides in the nucleus. Its function is as follows. Probably acts as a spliceosomal factor that contributes to spliceosome assembly and regulates the isoform switching of proteins such as PARP6. This is Arginine/serine-rich protein 1 (RSRP1) from Macaca fascicularis (Crab-eating macaque).